A 77-amino-acid polypeptide reads, in one-letter code: MAKLSCSYLLVFMLVFSAILMVEKVEGEECRLTIDKATPCHLSDCRLSCYTGYNGVGECFDDPNVPGPDNCGCRYNC.

The N-terminal stretch at 1–27 (MAKLSCSYLLVFMLVFSAILMVEKVEG) is a signal peptide. 4 disulfides stabilise this stretch: Cys30–Cys77, Cys40–Cys59, Cys45–Cys71, and Cys49–Cys73.

Belongs to the DEFL family.

The protein resides in the secreted. The sequence is that of Defensin-like protein 161 (LCR27) from Arabidopsis thaliana (Mouse-ear cress).